We begin with the raw amino-acid sequence, 322 residues long: Transaldolase (322 aa).

K136 serves as the catalytic Schiff-base intermediate with substrate.

Belongs to the transaldolase family. Type 1 subfamily. Homodimer.

Its subcellular location is the cytoplasm. The enzyme catalyses D-sedoheptulose 7-phosphate + D-glyceraldehyde 3-phosphate = D-erythrose 4-phosphate + beta-D-fructose 6-phosphate. The protein operates within carbohydrate degradation; pentose phosphate pathway; D-glyceraldehyde 3-phosphate and beta-D-fructose 6-phosphate from D-ribose 5-phosphate and D-xylulose 5-phosphate (non-oxidative stage): step 2/3. Its function is as follows. Transaldolase is important for the balance of metabolites in the pentose-phosphate pathway. In Xanthomonas oryzae pv. oryzae (strain PXO99A), this protein is Transaldolase.